We begin with the raw amino-acid sequence, 352 residues long: DNA polymerase IV (352 aa).

In terms of domain architecture, UmuC spans 7-187; sequence IIHIDMDCFY…LSLKKIPGIG (181 aa). Mg(2+) contacts are provided by Asp-11 and Asp-105. Glu-106 is a catalytic residue.

Belongs to the DNA polymerase type-Y family. In terms of assembly, monomer. The cofactor is Mg(2+).

Its subcellular location is the cytoplasm. The catalysed reaction is DNA(n) + a 2'-deoxyribonucleoside 5'-triphosphate = DNA(n+1) + diphosphate. Poorly processive, error-prone DNA polymerase involved in untargeted mutagenesis. Copies undamaged DNA at stalled replication forks, which arise in vivo from mismatched or misaligned primer ends. These misaligned primers can be extended by PolIV. Exhibits no 3'-5' exonuclease (proofreading) activity. May be involved in translesional synthesis, in conjunction with the beta clamp from PolIII. This is DNA polymerase IV from Colwellia psychrerythraea (strain 34H / ATCC BAA-681) (Vibrio psychroerythus).